A 226-amino-acid polypeptide reads, in one-letter code: Gap junction beta-2 protein (226 aa).

The stretch at 2 to 13 is an intramembrane region; it reads DWSALQTILGGV. Residues 14–20 are Cytoplasmic-facing; sequence NKHSTSI. A helical transmembrane segment spans residues 21–40; the sequence is GKIWLTVLFIFRIMILVVAA. Residues 41–73 lie on the Extracellular side of the membrane; the sequence is KEVWGDEQADFVCNTLQPGCKNVCYDHYFPISH. 3 residues coordinate Ca(2+): Glu-42, Gly-45, and Glu-47. 3 cysteine pairs are disulfide-bonded: Cys-53–Cys-180, Cys-60–Cys-174, and Cys-64–Cys-169. Residues 74 to 94 traverse the membrane as a helical segment; it reads IRLWALQLIFVSTPALLVAMH. Over 95-135 the chain is Cytoplasmic; it reads VAYYRHEKKRKFIRGEIKTEFKDIEEIKNQKVRIEGSLWWT. Residues 136–156 form a helical membrane-spanning segment; sequence YTGSIFFRVIFEAAFMYVFYV. Topologically, residues 157-189 are extracellular; that stretch reads MYDGFAMQRLVKCNAWPCPNTVDCFVSRPTEKT. A helical membrane pass occupies residues 190–210; it reads VFTVFMIAVSGICILLNVTEL. Topologically, residues 211-226 are cytoplasmic; it reads CYLLIRFCSGKSKKPV.

Belongs to the connexin family. Beta-type (group I) subfamily. In terms of assembly, a hemichannel or connexon is composed of a hexamer of connexins. A functional gap junction is formed by the apposition of two hemichannels. Forms heteromeric channels with GJB4. Interacts with CNST.

The protein localises to the cell membrane. Its subcellular location is the cell junction. It localises to the gap junction. Structural component of gap junctions. Gap junctions are dodecameric channels that connect the cytoplasm of adjoining cells. They are formed by the docking of two hexameric hemichannels, one from each cell membrane. Small molecules and ions diffuse from one cell to a neighboring cell via the central pore. This Ovis aries (Sheep) protein is Gap junction beta-2 protein (GJB2).